A 140-amino-acid chain; its full sequence is Methylglyoxal synthase (140 aa).

One can recognise an MGS-like domain in the interval 1–140; that stretch reads MKIALIAHDK…RGRKGEINGL (140 aa). Residues H8, K12, 34 to 37, and 54 to 55 each bind substrate; these read TGTT and SG. The active-site Proton donor/acceptor is D60. H87 is a binding site for substrate.

The protein belongs to the methylglyoxal synthase family.

It catalyses the reaction dihydroxyacetone phosphate = methylglyoxal + phosphate. Its function is as follows. Catalyzes the formation of methylglyoxal from dihydroxyacetone phosphate. The chain is Methylglyoxal synthase from Geobacillus sp. (strain WCH70).